The sequence spans 281 residues: sn-glycerol-3-phosphate transport system permease protein UgpE (281 aa).

A run of 6 helical transmembrane segments spans residues 16–36 (LILG…AATL), 85–105 (FSIT…IVWF), 113–133 (FFWM…FPTV), 142–162 (LNSY…TFLF), 202–222 (ALFV…LLII), and 247–267 (WNQV…IVLA). One can recognise an ABC transmembrane type-1 domain in the interval 77 to 268 (MLNSFIMAFS…IPPVVIVLAM (192 aa)).

The protein belongs to the binding-protein-dependent transport system permease family. UgpAE subfamily. The complex is composed of two ATP-binding proteins (UgpC), two transmembrane proteins (UgpA and UgpE) and a solute-binding protein (UgpB).

It localises to the cell inner membrane. In terms of biological role, part of the ABC transporter complex UgpBAEC involved in sn-glycerol-3-phosphate (G3P) import. Probably responsible for the translocation of the substrate across the membrane. The protein is sn-glycerol-3-phosphate transport system permease protein UgpE (ugpE) of Salmonella typhi.